Here is a 328-residue protein sequence, read N- to C-terminus: Ketol-acid reductoisomerase (NADP(+)) (328 aa).

The KARI N-terminal Rossmann domain maps to 2–182 (AKIYRDVDAS…GATRAGVIET (181 aa)). NADP(+) contacts are provided by residues 25–28 (YGIQ), Arg-48, Ser-53, and 83–86 (DMEQ). His-108 is an active-site residue. Gly-134 provides a ligand contact to NADP(+). In terms of domain architecture, KARI C-terminal knotted spans 183–328 (TFAEETETDL…IEMRRLLFGQ (146 aa)). Residues Asp-191, Glu-195, Glu-227, and Glu-231 each coordinate Mg(2+). Ser-252 is a substrate binding site.

This sequence belongs to the ketol-acid reductoisomerase family. It depends on Mg(2+) as a cofactor.

It carries out the reaction (2R)-2,3-dihydroxy-3-methylbutanoate + NADP(+) = (2S)-2-acetolactate + NADPH + H(+). It catalyses the reaction (2R,3R)-2,3-dihydroxy-3-methylpentanoate + NADP(+) = (S)-2-ethyl-2-hydroxy-3-oxobutanoate + NADPH + H(+). It participates in amino-acid biosynthesis; L-isoleucine biosynthesis; L-isoleucine from 2-oxobutanoate: step 2/4. The protein operates within amino-acid biosynthesis; L-valine biosynthesis; L-valine from pyruvate: step 2/4. Involved in the biosynthesis of branched-chain amino acids (BCAA). Catalyzes an alkyl-migration followed by a ketol-acid reduction of (S)-2-acetolactate (S2AL) to yield (R)-2,3-dihydroxy-isovalerate. In the isomerase reaction, S2AL is rearranged via a Mg-dependent methyl migration to produce 3-hydroxy-3-methyl-2-ketobutyrate (HMKB). In the reductase reaction, this 2-ketoacid undergoes a metal-dependent reduction by NADPH to yield (R)-2,3-dihydroxy-isovalerate. The protein is Ketol-acid reductoisomerase (NADP(+)) of Pyrobaculum arsenaticum (strain DSM 13514 / JCM 11321 / PZ6).